A 341-amino-acid polypeptide reads, in one-letter code: tRNA dimethylallyltransferase (341 aa).

15–22 serves as a coordination point for ATP; the sequence is GPTAAGKT. Residue 17-22 coordinates substrate; the sequence is TAAGKT. Interaction with substrate tRNA stretches follow at residues 44–47, 168–172, 253–258, and 302–309; these read DSAL, QRIQR, RCVGYR, and KRQITWLR.

This sequence belongs to the IPP transferase family. In terms of assembly, monomer. Mg(2+) serves as cofactor.

It carries out the reaction adenosine(37) in tRNA + dimethylallyl diphosphate = N(6)-dimethylallyladenosine(37) in tRNA + diphosphate. Functionally, catalyzes the transfer of a dimethylallyl group onto the adenine at position 37 in tRNAs that read codons beginning with uridine, leading to the formation of N6-(dimethylallyl)adenosine (i(6)A). The chain is tRNA dimethylallyltransferase from Verminephrobacter eiseniae (strain EF01-2).